The sequence spans 857 residues: Gelation factor (857 aa).

Met1 bears the Blocked amino end (Met) mark. The tract at residues 1–250 (MAAAPSGKTW…EKKRRETSDA (250 aa)) is actin-binding. 2 consecutive Calponin-homology (CH) domains span residues 12-117 (DVQK…LRYQ) and 125-227 (NSPK…DYAL). Residues 229–246 (KEKRDADALAALEKKRRE) form a regulatory site region. Filamin repeat units lie at residues 245 to 346 (RETS…NVKI), 347 to 446 (DGSD…EVKI), 447 to 545 (LNSD…SIHI), 546 to 645 (KPAA…TVTV), 646 to 747 (KPAP…DVKC), and 763 to 837 (FTVA…KQVL). The segment at 832–857 (PFKQVLGNPGKKNPEVKSFTTTRTAN) is disordered.

In terms of assembly, homodimer.

Functionally, F-actin cross-linking protein. In Dictyostelium discoideum (Social amoeba), this protein is Gelation factor (abpC).